The primary structure comprises 337 residues: Dimethyladenosine transferase 1, mitochondrial (337 aa).

The transit peptide at 1–84 (MSQVTARVLN…RSILRRQPQR (84 aa)) directs the protein to the mitochondrion. S-adenosyl-L-methionine is bound by residues 38 to 41 (QNFL), asparagine 39, leucine 41, glycine 67, glutamate 89, aspartate 118, and asparagine 140.

The protein belongs to the class I-like SAM-binding methyltransferase superfamily. rRNA adenine N(6)-methyltransferase family. KsgA subfamily.

The protein resides in the mitochondrion. In terms of biological role, probable S-adenosyl-L-methionine-dependent methyltransferase which specifically dimethylates mitochondrial 12S rRNA at the conserved stem loop. This is Dimethyladenosine transferase 1, mitochondrial (mtTFB1) from Drosophila pseudoobscura pseudoobscura (Fruit fly).